The sequence spans 638 residues: Neuroendocrine convertase 2 (638 aa).

The N-terminal stretch at 1-25 is a signal peptide; the sequence is MRGGCISQGKAAAGLLFCVMVFASA. Positions 26 to 109 are excised as a propeptide; sequence ERPVFTNHFL…QQEGFNRKKR (84 aa). One can recognise a Peptidase S8 domain in the interval 129-453; that stretch reads QWYLINTGQA…YGVLDAGAMV (325 aa). Catalysis depends on charge relay system residues aspartate 167 and histidine 208. 2 cysteine pairs are disulfide-bonded: cysteine 225-cysteine 376 and cysteine 317-cysteine 347. Asparagine 375 carries an N-linked (GlcNAc...) asparagine glycan. Serine 384 acts as the Charge relay system in catalysis. Residues 461 to 597 form the P/Homo B domain; it reads TVPERFHCVG…TLMLHGTQSA (137 aa). A disulfide bridge connects residues cysteine 468 and cysteine 494. N-linked (GlcNAc...) asparagine glycosylation is found at asparagine 514 and asparagine 524.

Belongs to the peptidase S8 family. Furin subfamily.

The protein localises to the cytoplasmic vesicle. It is found in the secretory vesicle. The protein resides in the secreted. The enzyme catalyses Release of protein hormones and neuropeptides from their precursors, generally by hydrolysis of -Lys-Arg-|- bonds.. Functionally, serine endopeptidase which is involved in the processing of hormone and other protein precursors at sites comprised of pairs of basic amino acid residues. Responsible for the release of glucagon from proglucagon in pancreatic A cells. The polypeptide is Neuroendocrine convertase 2 (PCSK2) (Bos taurus (Bovine)).